The chain runs to 324 residues: Polyketide biosynthesis acyltransferase homolog BaeD (324 aa).

S99 is a catalytic residue.

It is found in the cytoplasm. The protein operates within antibiotic biosynthesis; bacillaene biosynthesis. Probably involved in some intermediate steps for the synthesis of the antibiotic polyketide bacillaene which is involved in secondary metabolism. This is Polyketide biosynthesis acyltransferase homolog BaeD (baeD) from Bacillus velezensis (strain DSM 23117 / BGSC 10A6 / LMG 26770 / FZB42) (Bacillus amyloliquefaciens subsp. plantarum).